Here is a 419-residue protein sequence, read N- to C-terminus: Appendage-associated protein (419 aa).

A signal peptide spans 1 to 39 (MIVTYGTVGCPVSRGGSPGCGRRIAEELRLAEDARLRLA). Residues 232–262 (ERQKAQRRREERAAKAREELRKELNDIDAKW) adopt a coiled-coil conformation.

The protein localises to the secreted. In terms of biological role, associates with actin filament appendages that are formed in the inclusion appendages of the parasitophorous vacuole during infection of the host erythrocyte. The chain is Appendage-associated protein from Anaplasma marginale (strain St. Maries).